The sequence spans 365 residues: Ribosomal RNA large subunit methyltransferase M (365 aa).

Residues serine 194, 227 to 230 (CPGG), aspartate 246, aspartate 266, and aspartate 284 each bind S-adenosyl-L-methionine. Catalysis depends on lysine 313, which acts as the Proton acceptor.

This sequence belongs to the class I-like SAM-binding methyltransferase superfamily. RNA methyltransferase RlmE family. RlmM subfamily. As to quaternary structure, monomer.

The protein resides in the cytoplasm. It catalyses the reaction cytidine(2498) in 23S rRNA + S-adenosyl-L-methionine = 2'-O-methylcytidine(2498) in 23S rRNA + S-adenosyl-L-homocysteine + H(+). Functionally, catalyzes the 2'-O-methylation at nucleotide C2498 in 23S rRNA. In Pasteurella multocida (strain Pm70), this protein is Ribosomal RNA large subunit methyltransferase M.